Reading from the N-terminus, the 690-residue chain is Methionine--tRNA ligase (690 aa).

The 'HIGH' region signature appears at 12–22; it reads PYANGSIHLGH. 4 residues coordinate Zn(2+): C143, C146, C156, and C159. The 'KMSKS' region signature appears at 328 to 332; the sequence is KMSKS. Position 331 (K331) interacts with ATP. A tRNA-binding domain is found at 582 to 690; it reads DFAKVDLRIA…SGAEPGMKVK (109 aa).

This sequence belongs to the class-I aminoacyl-tRNA synthetase family. MetG type 1 subfamily. In terms of assembly, homodimer. Requires Zn(2+) as cofactor.

It localises to the cytoplasm. It catalyses the reaction tRNA(Met) + L-methionine + ATP = L-methionyl-tRNA(Met) + AMP + diphosphate. Its function is as follows. Is required not only for elongation of protein synthesis but also for the initiation of all mRNA translation through initiator tRNA(fMet) aminoacylation. This chain is Methionine--tRNA ligase, found in Thiobacillus denitrificans (strain ATCC 25259 / T1).